A 512-amino-acid chain; its full sequence is Sugar transport protein MST7 (512 aa).

Residues 1–17 (MENAGAGDGAPKHYPGK) lie on the Cytoplasmic side of the membrane. A helical membrane pass occupies residues 18 to 38 (MTVFVFIACLVASSGGLIFGY). At 39 to 81 (DIGISGGVTSMDPFLSRFFPSVYAKEKEVVDTNQYCKFDSEPL) the chain is on the extracellular side. The chain crosses the membrane as a helical span at residues 82–102 (TLFTSSLYLAALIASLFASVI). Residues 103-116 (TRKLGRKMTMLGGG) are Cytoplasmic-facing. Residues 117 to 137 (FIFLIGAVLNGAAVNVAMLII) traverse the membrane as a helical segment. Topologically, residues 138–139 (GR) are extracellular. A helical transmembrane segment spans residues 140-160 (ILLGIGVGFSIQAVPLYLSEM). At 161–166 (APAKMR) the chain is on the cytoplasmic side. Residues 167–187 (GMLNIIFQLMITVGILFANLI) form a helical membrane-spanning segment. Over 188-201 (NYFTDKIAGGWGWR) the chain is Extracellular. The helical transmembrane segment at 202–222 (VSLGLAAVPAVIMTVGSILLP) threads the bilayer. Residues 223 to 294 (DTPNSLLSRG…MSVLIPTLQQ (72 aa)) lie on the Cytoplasmic side of the membrane. The helical transmembrane segment at 295–315 (LTGINVVMFYAPVLFKTIGFG) threads the bilayer. At 316–320 (GTASL) the chain is on the extracellular side. Residues 321-341 (MSAVITGLVNMFATFVSIATV) traverse the membrane as a helical segment. The Cytoplasmic segment spans residues 342-347 (DRFGRR). A helical transmembrane segment spans residues 348 to 368 (VLFIQGGIQMIIAQFILGTLI). Topologically, residues 369–385 (AVKFGTAGVANISQGYA) are extracellular. The helical transmembrane segment at 386–406 (IVVVLFICLFVSAFAWSWGPL) threads the bilayer. At 407–425 (GWLVPSEIFPLEIRSAAQS) the chain is on the cytoplasmic side. Residues 426 to 446 (VVVVFNMAFTFFIAQIFLMML) form a helical membrane-spanning segment. Over 447–450 (CRLK) the chain is Extracellular. A helical membrane pass occupies residues 451–471 (FGLFFFFGAMELIMTGFVLVF). The Cytoplasmic segment spans residues 472-512 (LPETKGIPIEEMDRIWGEHWYWSRFVGAGRNRVMQMASTNV).

This sequence belongs to the major facilitator superfamily. Sugar transporter (TC 2.A.1.1) family.

It localises to the membrane. In terms of biological role, mediates active uptake of hexoses by sugar:proton symport. The chain is Sugar transport protein MST7 from Oryza sativa subsp. japonica (Rice).